The primary structure comprises 321 residues: MALKLAYLLVGGCGGCDMAVVDLSEKLVDALEHLEIVFWAPTVADVKYKDLEAMPDQSIDLGLISGMVRNKENEHLVKVMRQKCKIIVAFGICAALGGIPGMANMHKNEELFENAYIKSPSTDNPNNVIPQPVSKEGEFELTLPEFLDRVKPIDEVIEVDYYVGGCPPHHDHVAKVVEAVITGNLPPKGSWITNGKAVCDVCARNPAVKGKTREFVKEVKRMHEGIPDEEECLLNQGYLCLGPVTQGDCGALCPKVNIRCAGCGGPIPPTRDFGLRAISALGSILADENVTDQLIKKYPVLTKILYRYSLPGAMINKKLFK.

It belongs to the [NiFe]/[NiFeSe] hydrogenase small subunit family. As to quaternary structure, the F420-non-reducing hydrogenase is composed of three subunits; MvhA, MvhD and MvhG. It forms a complex with the heterodisulfide reductase (Hdr).

Its subcellular location is the cytoplasm. In terms of biological role, part of a complex that provides reducing equivalents for heterodisulfide reductase. In Archaeoglobus profundus (strain DSM 5631 / JCM 9629 / NBRC 100127 / Av18), this protein is F420-non-reducing hydrogenase iron-sulfur subunit G (mvhG).